The sequence spans 421 residues: UDP-N-acetylglucosamine 1-carboxyvinyltransferase (421 aa).

Position 24-25 (24-25 (KN)) interacts with phosphoenolpyruvate. A UDP-N-acetyl-alpha-D-glucosamine-binding site is contributed by Arg93. Residue Cys117 is the Proton donor of the active site. Cys117 bears the 2-(S-cysteinyl)pyruvic acid O-phosphothioketal mark. Residues Asp307 and Ile329 each coordinate UDP-N-acetyl-alpha-D-glucosamine.

The protein belongs to the EPSP synthase family. MurA subfamily.

It localises to the cytoplasm. It catalyses the reaction phosphoenolpyruvate + UDP-N-acetyl-alpha-D-glucosamine = UDP-N-acetyl-3-O-(1-carboxyvinyl)-alpha-D-glucosamine + phosphate. It functions in the pathway cell wall biogenesis; peptidoglycan biosynthesis. In terms of biological role, cell wall formation. Adds enolpyruvyl to UDP-N-acetylglucosamine. The polypeptide is UDP-N-acetylglucosamine 1-carboxyvinyltransferase (Blochmanniella pennsylvanica (strain BPEN)).